The sequence spans 218 residues: Cell division protein SepF (218 aa).

Residues 20–81 are disordered; sequence DDEYYDDRAP…GYRGGYADEP (62 aa). The segment covering 36 to 65 has biased composition (basic and acidic residues); the sequence is PRFDDDYGRYDGRDYDDARSDSRGDLRGEP.

Belongs to the SepF family. Homodimer. Interacts with FtsZ.

The protein localises to the cytoplasm. In terms of biological role, cell division protein that is part of the divisome complex and is recruited early to the Z-ring. Probably stimulates Z-ring formation, perhaps through the cross-linking of FtsZ protofilaments. Its function overlaps with FtsA. The polypeptide is Cell division protein SepF (Mycobacterium bovis (strain ATCC BAA-935 / AF2122/97)).